Here is a 552-residue protein sequence, read N- to C-terminus: Non-structural protein NS1 (552 aa).

This sequence belongs to the orbivirus non-structural protein NS1 family.

This Bluetongue virus 10 (isolate USA) (BTV 10) protein is Non-structural protein NS1 (Segment-5).